An 806-amino-acid polypeptide reads, in one-letter code: Leucine--tRNA ligase (806 aa).

Positions 40–51 match the 'HIGH' region motif; sequence PYPSGKGLHVGH. The short motif at 580–584 is the 'KMSKS' region element; it reads KMSKS. K583 contributes to the ATP binding site.

The protein belongs to the class-I aminoacyl-tRNA synthetase family.

Its subcellular location is the cytoplasm. It catalyses the reaction tRNA(Leu) + L-leucine + ATP = L-leucyl-tRNA(Leu) + AMP + diphosphate. This chain is Leucine--tRNA ligase, found in Ureaplasma urealyticum serovar 10 (strain ATCC 33699 / Western).